The primary structure comprises 205 residues: MRINLFVNILFGTACIIIFGLVILISYKLYRYIPKRNNSNKVYKEDYPSIMARAISCLIYFLPLLEGIAQFGIVCIDDHSWIRIIYKNTLAYIVVPYLESPLIGFCIFITLYLIFVRGIIQISKFIKFHIVQALLLYLLDSVIGTVLTSLPLEIGYSFIGDRLADTLLLITFMISIYAGTDALKGQYSNIPLISEAAKMQSKSTD.

5 helical membrane-spanning segments follow: residues 5-25 (LFVNILFGTACIIIFGLVILI), 54-74 (AISCLIYFLPLLEGIAQFGIV), 102-122 (LIGFCIFITLYLIFVRGIIQI), 130-150 (IVQALLLYLLDSVIGTVLTSL), and 163-183 (LADTLLLITFMISIYAGTDAL).

It belongs to the Tic20 family.

Its subcellular location is the plastid. The protein localises to the chloroplast membrane. In Cyanidium caldarium (Red alga), this protein is Tic20 family protein Ycf60 (ycf60).